Reading from the N-terminus, the 785-residue chain is Cadherin-7 (785 aa).

A signal peptide spans 1 to 27 (MKLGKVELCHFLQLIALFLCFSGMSQA). The propeptide occupies 28-47 (ELPRSRSKPYFQSGRSRTKR). At 28 to 607 (ELPRSRSKPY…AYVLPAGLST (580 aa)) the chain is on the extracellular side. Cadherin domains follow at residues 49 to 153 (WVWN…EPKF), 154 to 262 (LDGP…PPRF), 263 to 377 (PRRS…PPVF), 378 to 482 (SSPL…APEF), and 482 to 599 (FAMD…AEAY). N-linked (GlcNAc...) asparagine glycosylation is found at Asn-449 and Asn-530. Residues 608–628 (GALIAILACVLTLLVLILLIV) form a helical membrane-spanning segment. The Cytoplasmic segment spans residues 629 to 785 (TMRRRKKEPL…YGNGQESLYS (157 aa)).

The protein localises to the cell membrane. Functionally, cadherins are calcium-dependent cell adhesion proteins. They preferentially interact with themselves in a homophilic manner in connecting cells; cadherins may thus contribute to the sorting of heterogeneous cell types. This chain is Cadherin-7 (Cdh7), found in Mus musculus (Mouse).